The sequence spans 265 residues: MAGATTAKGGARRTPPPGPPPPALKARRRLRLPRRRTLLVTGVATALLGSGVTWLLYGSSWLRVEQVAVSGTAALTPGEVREAAAIPLNEPLAAVDTDSVERRLRARLSRIADVDVSRSWPDTIAVRVTERRPEAIVEKAGKFLEVDEEGVLFATVPQAPKGVPLLQVEADRSPSSRHFGATRLRREAVAVIAQLPEKVRADTLSVRVRSYDSIALGLTRGRTVVWGSSERGAAKAKTLTALMKAVPDAERYDVSAPTAPAVTHS.

Residues 1-13 (MAGATTAKGGARR) show a composition bias toward low complexity. The tract at residues 1-25 (MAGATTAKGGARRTPPPGPPPPALK) is disordered. The Cytoplasmic segment spans residues 1 to 35 (MAGATTAKGGARRTPPPGPPPPALKARRRLRLPRR). Pro residues predominate over residues 14–23 (TPPPGPPPPA). A helical transmembrane segment spans residues 36 to 58 (RTLLVTGVATALLGSGVTWLLYG). Over 59-265 (SSWLRVEQVA…APTAPAVTHS (207 aa)) the chain is Extracellular. The region spanning 62–131 (LRVEQVAVSG…DTIAVRVTER (70 aa)) is the POTRA domain.

Belongs to the FtsQ/DivIB family. FtsQ subfamily.

The protein localises to the cell membrane. In terms of biological role, essential cell division protein. This is Cell division protein FtsQ from Streptomyces bingchenggensis (strain BCW-1).